Reading from the N-terminus, the 696-residue chain is Tegument protein UL47 (696 aa).

Basic residues-rich tracts occupy residues 1-15 (MSVRGHAVRRRRAST) and 70-81 (RRRREARGHPGS). 2 disordered regions span residues 1-39 (MSVRGHAVRRRRASTRSHAPSAHRADSPVEDEPEGGGVG) and 54-130 (SEVE…YLGP). The tract at residues 57-84 (EAAGEMASEEPPPRRRREARGHPGSRRA) is RNA-binding. Positions 70-84 (RRRREARGHPGSRRA) match the Nuclear localization signal motif. The segment covering 87-103 (ARAAAPPRRASFPRPRS) has biased composition (low complexity). The short motif at 650-673 (SVLGPRVRVVDIMAQFRKLLMGDE) is the Nuclear export signal element.

This sequence belongs to the alphaherpesvirinae HHV-1 UL47 family. As to quaternary structure, interacts with US3 kinase. Interacts with UL31 and UL34; these interactions seem important for efficient virion nuclear egress. Interacts with UL41/VHS. Phosphorylated by US3. This phosphorylation is required for proper nuclear localization.

It localises to the virion tegument. Its subcellular location is the host nucleus. The protein localises to the host cytoplasm. Its function is as follows. Tegument protein that can bind to various RNA transcripts. Plays a role in the attenuation of selective viral and cellular mRNA degradation by modulating the activity of host shutoff RNase UL41/VHS. Also plays a role in the primary envelopment of virions in the perinuclear space, probably by interacting with two nuclear egress proteins UL31 and UL34. The polypeptide is Tegument protein UL47 (Human herpesvirus 2 (strain HG52) (HHV-2)).